An 82-amino-acid polypeptide reads, in one-letter code: Probable glutamyl-tRNA(Gln) amidotransferase subunit C (82 aa).

It belongs to the GatC family. Heterotrimer of A, B and C subunits.

The enzyme catalyses L-glutamyl-tRNA(Gln) + L-glutamine + ATP + H2O = L-glutaminyl-tRNA(Gln) + L-glutamate + ADP + phosphate + H(+). The catalysed reaction is L-aspartyl-tRNA(Asn) + L-glutamine + ATP + H2O = L-asparaginyl-tRNA(Asn) + L-glutamate + ADP + phosphate + 2 H(+). Functionally, allows the formation of correctly charged Asn-tRNA(Asn) or Gln-tRNA(Gln) through the transamidation of misacylated Asp-tRNA(Asn) or Glu-tRNA(Gln) in organisms which lack either or both of asparaginyl-tRNA or glutaminyl-tRNA synthetases. The reaction takes place in the presence of glutamine and ATP through an activated phospho-Asp-tRNA(Asn) or phospho-Glu-tRNA(Gln). This Methanocaldococcus jannaschii (strain ATCC 43067 / DSM 2661 / JAL-1 / JCM 10045 / NBRC 100440) (Methanococcus jannaschii) protein is Probable glutamyl-tRNA(Gln) amidotransferase subunit C.